Consider the following 310-residue polypeptide: Mas-related G-protein coupled receptor member E (310 aa).

Topologically, residues 1–22 (MTSLSVHTDSPSTQGEMAFNLT) are extracellular. The N-linked (GlcNAc...) asparagine glycan is linked to N20. The helical transmembrane segment at 23–43 (ILSLTELLSLGGLLGNGVALW) threads the bilayer. Topologically, residues 44-60 (LLNQNVYRNPFSIYLLD) are cytoplasmic. Residues 61–81 (VACADLIFLCCHMVAIIPELL) form a helical membrane-spanning segment. The Extracellular segment spans residues 82–92 (QDQLNFPEFVH). A helical transmembrane segment spans residues 93-113 (ISLTMLRFFCYIVGLSLLAAI). At 114-133 (STEQCLATLFPAWYLCRRPR) the chain is on the cytoplasmic side. A helical transmembrane segment spans residues 134-154 (YLTTCVCALIWVLCLLLDLLL). Residues 155–174 (SGACTQFFGAPSYHLCDMLW) lie on the Extracellular side of the membrane. Residues 175 to 195 (LVVAVLLAALCCTMCVTSLLL) traverse the membrane as a helical segment. Topologically, residues 196–213 (LLRVERGPERHQPRGFPT) are cytoplasmic. The helical transmembrane segment at 214 to 234 (LVLLAVLLFLFCGLPFGIFWL) threads the bilayer. At 235–248 (SKNLSWHIPLYFYH) the chain is on the extracellular side. N237 carries N-linked (GlcNAc...) asparagine glycosylation. Residues 249 to 269 (FSFFMASVHSAAKPAIYFFLG) traverse the membrane as a helical segment. The Cytoplasmic portion of the chain corresponds to 270–310 (STPGQRFREPLRLVLQRALGDEAELGAGREASQGGLVDMTV).

Belongs to the G-protein coupled receptor 1 family. Mas subfamily.

The protein localises to the cell membrane. Functionally, orphan receptor. May regulate nociceptor function and/or development, including the sensation or modulation of pain. The protein is Mas-related G-protein coupled receptor member E (Mrgpre) of Mus musculus (Mouse).